Reading from the N-terminus, the 411-residue chain is uncharacterized protein (411 aa).

It belongs to the peptidase M20 family.

This is an uncharacterized protein from Haemophilus influenzae (strain ATCC 51907 / DSM 11121 / KW20 / Rd).